Here is a 119-residue protein sequence, read N- to C-terminus: DNA-binding protein MMP0157 (119 aa).

The span at 1–12 shows a compositional bias: basic and acidic residues; sequence MNPEEIRQRRLQ. The disordered stretch occupies residues 1 to 35; sequence MNPEEIRQRRLQEMQAKAQAQGAANDPEAQRQMQE.

This sequence belongs to the PDCD5 family.

In Methanococcus maripaludis (strain DSM 14266 / JCM 13030 / NBRC 101832 / S2 / LL), this protein is DNA-binding protein MMP0157.